A 466-amino-acid chain; its full sequence is Tubulointerstitial nephritis antigen-like (466 aa).

Residues 1–21 (MWGCWLGLLLLLLAGQAALEA) form the signal peptide. Residues 49-96 (EQDMCCRGRADECALPYLGATCYCDLFCNRTVSDCCPDFWDFCLGIPP) form the SMB domain. 5 disulfides stabilise this stretch: cysteine 53–cysteine 72, cysteine 70–cysteine 72, cysteine 70–cysteine 84, cysteine 76–cysteine 83, and cysteine 84–cysteine 91. An N-linked (GlcNAc...) asparagine glycan is attached at asparagine 77. N-linked (GlcNAc...) asparagine glycosylation is present at asparagine 160.

This sequence belongs to the peptidase C1 family. Glycosylated. In terms of tissue distribution, highly expressed in kidney, heart and adrenocortical cells of adrenal glands. Moderately expressed in spleen and liver. Also found in prostate, seminal vesicle, epididymis and testis in male reproductive organs. In adrenal glands is found in the outer cortical regions corresponding to the zona glomerulosa (zG) and the undifferentiated cell zone (zU) (at protein level).

It localises to the secreted. Its function is as follows. May be implicated in the adrenocortical zonation and in mechanisms for repressing the CYP11B1 gene expression in adrenocortical cells. This is a non catalytic peptidase C1 family protein. The chain is Tubulointerstitial nephritis antigen-like (Tinagl1) from Mus musculus (Mouse).